The sequence spans 691 residues: Protein 4.2 (691 aa).

The N-myristoyl glycine moiety is linked to residue Gly-2. A band 3 binding region spans residues 31–39 (LFVRRGQPF). Position 248 is a phosphoserine; by PKA (Ser-248).

This sequence belongs to the transglutaminase superfamily. Transglutaminase family. In terms of assembly, component of the ankyrin-1 complex in the erythrocyte, composed of ANK1, RHCE, RHAG, SLC4A1, EPB42, GYPA, GYPB and AQP1. Interacts with SLC4A1 (via the cytoplasmic domain); this interaction is mediated by the SLC4A1 Band 3-I dimer. Interacts with ANK1 (via ANK 1-13 repeats). Interacts with AQP1 (via the C-terminal). Both cAMP-dependent kinase (CAPK) and another kinase present in the red-blood cells seem to be able to phosphorylate EPB42.

The protein resides in the cell membrane. The protein localises to the cytoplasm. It is found in the cytoskeleton. Its function is as follows. Component of the ankyrin-1 complex, a multiprotein complex involved in the stability and shape of the erythrocyte membrane. In Homo sapiens (Human), this protein is Protein 4.2.